A 1989-amino-acid polypeptide reads, in one-letter code: Zinc finger C3H1 domain-containing protein (1989 aa).

Disordered regions lie at residues 1 to 133, 148 to 218, 251 to 290, and 310 to 365; these read MATA…RPSF, GRPY…SKNE, SSKEENVQEDPKTLNFEDQTSTDNVSITKDSSKEVAPEEK, and LPGD…LGED. N-acetylalanine is present on A2. A phosphoserine mark is found at S15, S28, and S34. Residues 20-32 show a composition bias toward acidic residues; sequence GELEDGEISDDDN. Low complexity predominate over residues 33–44; it reads NSQIRSRSSSSS. The span at 62-72 shows a compositional bias: gly residues; that stretch reads RGGGSGGGGGS. Low complexity-rich tracts occupy residues 114–132, 183–192, and 201–210; these read PPSVRMPSSSLSESSPRPS, GFSSSQSWRE, and KSFGRSPSRK. The residue at position 128 (S128) is a Phosphoserine. Residues 219-259 are a coiled coil; the sequence is NCVEETFEDLLLKYKQIQLELECINKDEKLALSSKEENVQE. Phosphoserine is present on S251. Positions 251–262 are enriched in basic and acidic residues; it reads SSKEENVQEDPK. Residues 266–279 show a composition bias toward polar residues; the sequence is FEDQTSTDNVSITK. Positions 280-290 are enriched in basic and acidic residues; it reads DSSKEVAPEEK. The span at 330–340 shows a compositional bias: polar residues; it reads KSDTTDSSQGL. A phosphoserine mark is found at S352 and S383. The stretch at 358–389 forms a coiled coil; it reads SEKKLGEDEEELSELQLRLLALQSASKKWQQK. Disordered stretches follow at residues 385 to 671 and 711 to 770; these read KWQQ…SNLS and LNDS…PEAL. The span at 392–402 shows a compositional bias: basic and acidic residues; sequence QVMKESKEKLT. Positions 430–440 are enriched in basic residues; that stretch reads ALRKQQTKAWK. A coiled-coil region spans residues 432–487; the sequence is RKQQTKAWKKLQQQKEQERQKEEDQRKQAEEEERRKREEEIRKIRDLSNQEEQYNR. Basic and acidic residues-rich tracts occupy residues 444-479 and 501-515; these read QQKEQERQKEEDQRKQAEEEERRKREEEIRKIRDLS and KSSDPDLRRSLDKQP. Acidic residues predominate over residues 527–537; sequence NYEEVAMDTDS. Residues 574–583 are compositionally biased toward low complexity; that stretch reads VSSLPPLSQP. The span at 594 to 616 shows a compositional bias: pro residues; it reads PLPPLPPLPPLPPEDPEQPPKPP. Positions 647-671 are enriched in polar residues; the sequence is TSSNSDPPSPPVLNNSHPVPRSNLS. A phosphoserine mark is found at S662, S714, S717, and S719. Over residues 755 to 770 the composition is skewed to basic and acidic residues; sequence PKSEKENDPLRTPEAL. T766 carries the post-translational modification Phosphothreonine. Residues S805 and S809 each carry the phosphoserine modification. The stretch at 847–909 forms a coiled coil; it reads LKNLVQQEAK…QQRVTIKKAL (63 aa). Residues S948, S949, and S953 each carry the phosphoserine modification. Positions 965-989 form a coiled coil; it reads EKRRLQKLEYEYALKIQKLKEARAL. A phosphoserine mark is found at S998 and S1046. The segment at 1185–1206 adopts a C3H1-type zinc-finger fold; it reads FCRFDLTGTCNDDDCQWQHIQD. Phosphoserine is present on residues S1301, S1303, and S1304. TPR repeat units follow at residues 1361–1400, 1401–1434, 1438–1471, 1478–1511, 1602–1635, 1636–1669, and 1745–1778; these read VQLWLKLAYKYLNQNEGECSESLDSALNVLARALENNKDN, PEIWCHYLRLFSKRGTKDEVQEMCETAVEYAPDY, WTFLHLESTFEEKDYVCERMLEFLMGAAKQETSN, LEALLFRVQLHIFTGRCQSALAILQNALKSANDG, LPLYTNMIALHQLLERYEAAMELCKSLLESCPIN, CQLLEALVALYLQTNQHDKARAVWLTAFEKNPQN, and PYLWLIYCLCHPLQSSIKETVEAYEAALGVAMRC.

Component of the poly(A) tail exosome targeting (PAXT) complex made of accessory factors, such as PABPN1, ZFC3H1 and MTREX, and which directs a subset of long and polyadenylated poly(A) RNAs for exosomal degradation. Co-localizes with component of the CBC-ARS2 (CBCA) complex. Binds to RNA exosome components. Interacts with NCBP1/CBP80, ZC3H18, MTREX and PABPN1 in a RNase-insensitive manner, and with PABPC4, PABPC1 and ZC3H14 in a RNase-sensitive manner.

It localises to the nucleus. Its function is as follows. Subunit of the trimeric poly(A) tail exosome targeting (PAXT) complex, a complex that directs a subset of long and polyadenylated poly(A) RNAs for exosomal degradation. The RNA exosome is fundamental for the degradation of RNA in eukaryotic nuclei. Substrate targeting is facilitated by its cofactor MTREX, which links to RNA-binding protein adapters. This is Zinc finger C3H1 domain-containing protein (ZFC3H1) from Homo sapiens (Human).